Reading from the N-terminus, the 530-residue chain is T-complex protein 1 subunit gamma (530 aa).

It belongs to the TCP-1 chaperonin family. Heterooligomeric complex of about 850 to 900 kDa that forms two stacked rings, 12 to 16 nm in diameter.

The protein resides in the cytoplasm. Its function is as follows. Molecular chaperone; assists the folding of proteins upon ATP hydrolysis. Known to play a role, in vitro, in the folding of actin and tubulin. This is T-complex protein 1 subunit gamma (cct3) from Dictyostelium discoideum (Social amoeba).